A 381-amino-acid chain; its full sequence is Acetylornithine deacetylase (381 aa).

Residue His79 coordinates Zn(2+). The active site involves Asp81. Asp111 lines the Zn(2+) pocket. Glu143 is a catalytic residue. Zn(2+)-binding residues include Glu144, Glu168, and His354.

It belongs to the peptidase M20A family. ArgE subfamily. Homodimer. Zn(2+) serves as cofactor. Co(2+) is required as a cofactor. Requires glutathione as cofactor.

It localises to the cytoplasm. The catalysed reaction is N(2)-acetyl-L-ornithine + H2O = L-ornithine + acetate. It functions in the pathway amino-acid biosynthesis; L-arginine biosynthesis; L-ornithine from N(2)-acetyl-L-ornithine (linear): step 1/1. Its function is as follows. Catalyzes the hydrolysis of the amide bond of N(2)-acetylated L-amino acids. Cleaves the acetyl group from N-acetyl-L-ornithine to form L-ornithine, an intermediate in L-arginine biosynthesis pathway, and a branchpoint in the synthesis of polyamines. The chain is Acetylornithine deacetylase from Buchnera aphidicola subsp. Acyrthosiphon pisum (strain APS) (Acyrthosiphon pisum symbiotic bacterium).